The sequence spans 87 residues: U3-theraphotoxin-Hhn1c (87 aa).

The N-terminal stretch at methionine 1–alanine 24 is a signal peptide. Positions serine 25–arginine 52 are excised as a propeptide. 3 disulfide bridges follow: cysteine 54–cysteine 67, cysteine 61–cysteine 72, and cysteine 66–cysteine 79.

The protein belongs to the neurotoxin 10 (Hwtx-1) family. 51 (Hntx-8) subfamily. Hntx-8 sub-subfamily. As to expression, expressed by the venom gland.

The protein localises to the secreted. Its function is as follows. Ion channel inhibitor. The sequence is that of U3-theraphotoxin-Hhn1c from Cyriopagopus hainanus (Chinese bird spider).